Reading from the N-terminus, the 87-residue chain is Small ribosomal subunit protein bS20 (87 aa).

The protein belongs to the bacterial ribosomal protein bS20 family.

Functionally, binds directly to 16S ribosomal RNA. The chain is Small ribosomal subunit protein bS20 from Corynebacterium jeikeium (strain K411).